The sequence spans 309 residues: Elongation factor Ts (309 aa).

Residues 98-101 (TDFV) form an involved in Mg(2+) ion dislocation from EF-Tu region.

The protein belongs to the EF-Ts family.

The protein localises to the cytoplasm. In terms of biological role, associates with the EF-Tu.GDP complex and induces the exchange of GDP to GTP. It remains bound to the aminoacyl-tRNA.EF-Tu.GTP complex up to the GTP hydrolysis stage on the ribosome. This Orientia tsutsugamushi (strain Boryong) (Rickettsia tsutsugamushi) protein is Elongation factor Ts.